We begin with the raw amino-acid sequence, 332 residues long: Melanocortin receptor 4 (332 aa).

Residues 1-43 (MNSTQPLGMHTSLHSWNRSAHGMPTNVSESLAKGYSDGGCYEQ) are Extracellular-facing. N-linked (GlcNAc...) asparagine glycosylation is found at Asn-2, Asn-17, and Asn-26. Intrachain disulfides connect Cys-40-Cys-279 and Cys-271-Cys-277. A helical transmembrane segment spans residues 44-69 (LFVSPEVFVTLGVISLLENILVIVAI). The Cytoplasmic segment spans residues 70–81 (AKNKNLHSPMYF). Residues 82–106 (FICSLAVADMLVSVSNGSETIVITL) traverse the membrane as a helical segment. Ca(2+) contacts are provided by Glu-100, Asp-122, and Asp-126. Over 107–123 (LNSTDTDAQSFTVDIDN) the chain is Extracellular. Residues 124–145 (VIDSVICSSLLASICSLLSIAV) form a helical membrane-spanning segment. The Cytoplasmic portion of the chain corresponds to 146–165 (DRYFTIFYALQYHNIMTVKR). A helical transmembrane segment spans residues 166–186 (VAITISAIWAACTVSGVLFII). Topologically, residues 187–191 (YSDSS) are extracellular. Residues 192-215 (AVIICLITVFFTMLALMASLYVHM) traverse the membrane as a helical segment. Over 216 to 248 (FLMARLHIKRIAVLPGSGTIRQGANMKGAITLT) the chain is Cytoplasmic. Residues 249–271 (ILIGVFVVCWAPFFLHLIFYISC) form a helical membrane-spanning segment. Residues 272-280 (PQNPYCVCF) are Extracellular-facing. The helical transmembrane segment at 281-304 (MSHFNLYLILIMCNSIIDPLIYAL) threads the bilayer. Topologically, residues 305–332 (RSQELRKTFKEIICCSPLGGLCDLSSRY) are cytoplasmic. Cys-318 carries the S-palmitoyl cysteine lipid modification.

Belongs to the G-protein coupled receptor 1 family. As to quaternary structure, homodimer; disulfide-linked, also forms higher order oligomers. Interacts with GNAS. Interacts with ATRNL1. Interacts with MGRN1; this interaction competes with GNAS-binding and thus inhibits agonist-induced cAMP production. Interacts with MRAP and MRAP2; these associated factors increase ligand-sensitivity and generation of cAMP.

Its subcellular location is the cell membrane. Functionally, hormone receptor that acts as a key component of the leptin-melanocortin pathway at the intersection of homeostatic maintenance of energetic state. Plays a role in regulating food intake: activation by a stimulating hormone such as anorexigenic alpha-melanocyte stimulating hormone (alpha-MSH) inhibits appetite, whereas binding to a natural antagonist like Agouti-related protein/AGRP promotes appetite. G-protein-coupled receptor that activates conventional Galphas signaling leading to induction of anorexogenic signaling in the hypothalamus to result in negative energy balance. Regulates the firing activity of neurons from the hypothalamus by alpha-MSH and AGRP independently of Galphas signaling by ligand-induced coupling of closure of inwardly rectifying potassium channel KCNJ13. In intestinal epithelial cells, plays a role in the inhibition of hepatic glucose production via nesfatin-1/NUCB2 leading to increased cyclic adenosine monophosphate (cAMP) levels and glucagon-like peptide 1 (GLP-1) secretion in the intestinal epithelium. The chain is Melanocortin receptor 4 (MC4R) from Bos taurus (Bovine).